Here is an 87-residue protein sequence, read N- to C-terminus: U3-theraphotoxin-Hhn1a 2 (87 aa).

The signal sequence occupies residues 1 to 24 (MVNMKASMFLTFAGLVLLFVVCYA). A propeptide spanning residues 25–52 (SESEEKEFPKEMLSSIFAVDDDFKQEER) is cleaved from the precursor. 3 cysteine pairs are disulfide-bonded: Cys-54-Cys-67, Cys-61-Cys-72, and Cys-66-Cys-79.

Belongs to the neurotoxin 10 (Hwtx-1) family. 51 (Hntx-8) subfamily. Hntx-8 sub-subfamily. As to expression, expressed by the venom gland.

Its subcellular location is the secreted. In terms of biological role, ion channel inhibitor. This chain is U3-theraphotoxin-Hhn1a 2, found in Cyriopagopus hainanus (Chinese bird spider).